Reading from the N-terminus, the 404-residue chain is MDQSGMEIPVTLIIKAPNQKYSDQTISCFLNWTVGKLKTHLSNVYPSKPLTKDQRLVYSGRLLPDHLQLKDILRKQDEYHMVHLVCASRSPPSSPKSSTDRGSHEALASSTSSNSDHSDSTTPSPSQESLSLVTGSSEGLRQRTLSQAQTDPAQSHQFPYVIQGNVDHQFPGQGVPPAFPVYPALSPLQMLWWQQMYAHQYYMQYQAAVSAQATSSAGSAQRAASSPLNLAHVPGEEPPPAPNLVAQENGPMNENVQMNAQGGPVLNEEDLNRDWLDWVYTFSRAAVLLSIVYFYSSFSRFIMVMGAMLLVYLHQAGWFPFRQEGGQQQAPNNVDANNDGHNANNLELEEMERLMDDGLEDESGEDAGEDASAAQRPGLMASAWSFITTFFTSLIPEGPPQVAN.

The Ubiquitin-like domain maps to 10–89; it reads VTLIIKAPNQ…HMVHLVCASR (80 aa). The disordered stretch occupies residues 86–153; that stretch reads CASRSPPSSP…TLSQAQTDPA (68 aa). Low complexity-rich tracts occupy residues 88 to 97 and 109 to 126; these read SRSPPSSPKS and SSTSSNSDHSDSTTPSPS. Residues 127-153 show a composition bias toward polar residues; the sequence is QESLSLVTGSSEGLRQRTLSQAQTDPA. A helical transmembrane segment spans residues 301 to 321; that stretch reads FIMVMGAMLLVYLHQAGWFPF.

It localises to the membrane. Its function is as follows. Could be involved in the unfolded protein response (UPR) pathway. The sequence is that of Homocysteine-responsive endoplasmic reticulum-resident ubiquitin-like domain member 2 protein (Herpud2) from Mus musculus (Mouse).